The primary structure comprises 89 residues: U-scoloptoxin(12)-Er1a (89 aa).

Positions 1-22 (MKGLFLVVFLMWFVSQMNTEET) are cleaved as a signal peptide.

Belongs to the scoloptoxin-12 family. Contains 3 disulfide bonds. Expressed by the venom gland.

It is found in the secreted. The polypeptide is U-scoloptoxin(12)-Er1a (Ethmostigmus rubripes (Giant centipede)).